The primary structure comprises 293 residues: Ethanolamine ammonia-lyase small subunit (293 aa).

Adenosylcob(III)alamin-binding residues include Val207 and Glu228.

This sequence belongs to the EutC family. In terms of assembly, the basic unit is a heterodimer which dimerizes to form tetramers. The heterotetramers trimerize; 6 large subunits form a core ring with 6 small subunits projecting outwards. It depends on adenosylcob(III)alamin as a cofactor.

The protein localises to the bacterial microcompartment. It catalyses the reaction ethanolamine = acetaldehyde + NH4(+). It participates in amine and polyamine degradation; ethanolamine degradation. Its function is as follows. Catalyzes the deamination of various vicinal amino-alcohols to oxo compounds. Allows this organism to utilize ethanolamine as the sole source of nitrogen and carbon in the presence of external vitamin B12. In Clostridioides difficile (strain 630) (Peptoclostridium difficile), this protein is Ethanolamine ammonia-lyase small subunit.